The following is a 613-amino-acid chain: Metacaspase-1 (613 aa).

Active-site residues include H404 and C460.

This sequence belongs to the peptidase C14B family. Monomer.

Activated by Ca(2+). Cysteine protease that cleaves specifically after arginine or lysine residues. May play a role in apoptosis. The polypeptide is Metacaspase-1 (Plasmodium falciparum (isolate 3D7)).